Reading from the N-terminus, the 49-residue chain is Large ribosomal subunit protein bL33D (49 aa).

The protein belongs to the bacterial ribosomal protein bL33 family.

The sequence is that of Large ribosomal subunit protein bL33D (rpmG4) from Enterococcus faecalis (strain ATCC 700802 / V583).